Here is a 371-residue protein sequence, read N- to C-terminus: Leu/Ile/Val-binding protein homolog 1 (371 aa).

The first 23 residues, 1–23 (MRKTLFSGVALAAVIAFGGSAWA), serve as a signal peptide directing secretion.

Belongs to the leucine-binding protein family.

Its function is as follows. Component of an amino-acid transport system. In Brucella suis biovar 1 (strain 1330), this protein is Leu/Ile/Val-binding protein homolog 1.